The sequence spans 1029 residues: Toll-like receptor 9 (1029 aa).

Residues 1–24 (MGPYCAPHPLSLLVQAAALAAALA) form the signal peptide. Topologically, residues 25–815 (QGTLPAFLPC…LCLDETLSLD (791 aa)) are extracellular. A disulfide bond links Cys34 and Cys44. 46-50 (WLFLK) provides a ligand contact to DNA. LRR repeat units follow at residues 61–84 (RANVTSLSLISNRIHHLHDSDFVH), 86–109 (SNLRVLNLKWNCPPAGLSPMHFPC), 121–146 (VPTLEELNLSYNGITTVPALPSSLVS), 149–165 (LSRTSILVLGPTHFTGL), 166–189 (HALRFLYMDGNCYYKNPCQQAVEV), 197–220 (LGNLTHLSLKYNNLTEVPRRLPPS), 222–241 (DTLLLSYNHIITLAPEDLAN), 242–267 (LTALRVLDVGGNCRRCDHARNPCREC), 282–305 (LSRLEGLVLKDSSLYKLEKDWFRG), 307–331 (GRLQVLDLSENFLYDYITKTTIFRN), 332–355 (LTQLRRLNLSFNYHKKVSFAHLQL), 362–385 (LVSLEKLDMHGIFFRSLTNTTLRP), 389–412 (LPKLQSLSLQLNFINQAELSIFGA), 414–439 (PSLLFVDLSDNRISGAARPVAALGEV), 469–492 (CNLNFTLDLSRNNLVTIQQEMFTR), 494–517 (SRLQCLRLSHNSISQAVNGSQFVP), 518–541 (LTRLRVLDLSYNKLDLYHGRSFTE), 543–570 (PQLEALDLSYNSQPFSMQGVGHNLSFVA), 572–596 (LPSLRYLSLAHNGIHSRVSQKLSSA), 598–620 (LRALDFSGNSLSQMWAEGDLYLC), 625–648 (LRNLVQLDLSKNHLHTLLPRHLDN), 650–673 (PKSLRQLRLRDNNLAFFNWSSLTV), 674–697 (LPQLEALDLAGNQLKALSNGSLPP), 699–721 (TRLQKLDVSSNSIGFVTPGFFVL), 722–745 (ANRLKELNLSANALKTVDPFWFGR), and 747–770 (TETLKILDVSANPLHCACGAAFVD). A glycan (N-linked (GlcNAc...) asparagine) is linked at Asn63. DNA contacts are provided by residues 71–76 (SNRIHH) and 94–108 (KWNCPPAGLSPMHFP). Cys97 and Cys109 are oxidised to a cystine. Asn128 carries N-linked (GlcNAc...) asparagine glycosylation. DNA-binding positions include Tyr131, Arg151, and 178-180 (YYK). Cys177 and Cys183 are joined by a disulfide. A glycan (N-linked (GlcNAc...) asparagine) is linked at Asn199. Tyr207 provides a ligand contact to DNA. Asn209 and Asn241 each carry an N-linked (GlcNAc...) asparagine glycan. Cystine bridges form between Cys254-Cys267 and Cys257-Cys264. Cys257 carries the S-palmitoyl cysteine lipid modification. A DNA-binding site is contributed by Arg261. A lipid anchor (S-palmitoyl cysteine) is attached at Cys264. 3 N-linked (GlcNAc...) asparagine glycosylation sites follow: Asn331, Asn339, and Asn380. An intrachain disulfide couples Cys469 to Cys498. N-linked (GlcNAc...) asparagine glycans are attached at residues Asn472 and Asn511. N-linked (GlcNAc...) asparagine glycosylation occurs at Asn565. 2 N-linked (GlcNAc...) asparagine glycosylation sites follow: Asn667 and Asn692. Residue Asn729 is glycosylated (N-linked (GlcNAc...) asparagine). Intrachain disulfides connect Cys762/Cys788 and Cys764/Cys807. The chain crosses the membrane as a helical span at residues 816-836 (CFGFSLLMVALGLAVPMLHHL). Residues 837–1029 (CGWDLWYCFH…NFCRGPTTAE (193 aa)) are Cytoplasmic-facing. Residues 864 to 1009 (LLYDAFVVFD…SFWANLGMAL (146 aa)) form the TIR domain.

Belongs to the Toll-like receptor family. Monomer and homodimer. Exists as a monomer in the absence of unmethylated cytidine-phosphate-guanosine (CpG) ligand. Proteolytic processing of an insertion loop (Z-loop) is required for homodimerization upon binding to the unmethylated CpG ligand leading to its activation. Interacts with MYD88 via their respective TIR domains. Interacts with BTK. Interacts (via transmembrane domain) with UNC93B1. Interacts with CD300LH; the interaction may promote full activation of TLR9-triggered innate responses. Interacts with CNPY3 and HSP90B1; this interaction is required for proper folding in the endoplasmic reticulum. Interacts with SMPDL3B. Interacts with CD82; this interaction is essential for TLR9-dependent myddosome formation in response to CpG stimulation. In terms of processing, activated by proteolytic cleavage of the flexible loop between repeats LRR14 and LRR15 within the ectodomain. Cleavage requires UNC93B1. Proteolytically processed by first removing the majority of the ectodomain by either asparagine endopeptidase (AEP) or a cathepsin followed by a trimming event that is solely cathepsin mediated and required for optimal receptor signaling. Palmitoylated by ZDHHC3 in the Golgi regulates TLR9 trafficking from the Golgi to endosomes. Depalmitoylation by PPT1 controls the release of TLR9 from UNC93B1 in endosomes.

Its subcellular location is the endoplasmic reticulum membrane. It is found in the endosome. The protein resides in the lysosome. The protein localises to the cytoplasmic vesicle. It localises to the phagosome. Functionally, key component of innate and adaptive immunity. TLRs (Toll-like receptors) control host immune response against pathogens through recognition of molecular patterns specific to microorganisms. TLR9 is a nucleotide-sensing TLR which is activated by unmethylated cytidine-phosphate-guanosine (CpG) dinucleotides. Acts via MYD88 and TRAF6, leading to NF-kappa-B activation, cytokine secretion and the inflammatory response. Upon CpG stimulation, induces B-cell proliferation, activation, survival and antibody production. The polypeptide is Toll-like receptor 9 (TLR9) (Ovis aries (Sheep)).